The sequence spans 326 residues: AA10 family lytic polysaccharide monooxygenase C (326 aa).

The signal sequence occupies residues 1 to 32 (MVFSNSNASVSLFRLVALVATLSHLVFTFVDA). Cu(2+) contacts are provided by histidine 33 and histidine 118. Positions 33–200 (HGYVTFPASR…ANAFYQCLDL (168 aa)) constitute a Chitin-binding type-4 domain. Cysteine 81 and cysteine 197 form a disulfide bridge. 4 N-linked (GlcNAc...) asparagine glycosylation sites follow: asparagine 206, asparagine 215, asparagine 266, and asparagine 303. The disordered stretch occupies residues 206-326 (NSSSSSSSSN…KSQMRRDRQG (121 aa)). Residues 207 to 281 (SSSSSSSSNS…NNGGSSGSTT (75 aa)) show a composition bias toward low complexity.

It belongs to the polysaccharide monooxygenase AA10 family. The cofactor is Cu(2+).

The protein localises to the secreted. In terms of biological role, lytic polysaccharide monooxygenase (LPMO) that oxidatively cleaves alpha- and beta-chitin with C1 regioselectivity. Catalysis by LPMOs requires the reduction of the active-site copper from Cu(II) to Cu(I) by a reducing agent and H(2)O(2) or O(2) as a cosubstrate. Exhibits enzymatic activity on U.maydis fungal cell wall chitin and Boosts chitin hydrolysis by chitinase GH18A. In Mycosarcoma maydis (Corn smut fungus), this protein is AA10 family lytic polysaccharide monooxygenase C.